A 474-amino-acid polypeptide reads, in one-letter code: Cysteine--tRNA ligase (474 aa).

Cys-27 provides a ligand contact to Zn(2+). The short motif at 29-39 is the 'HIGH' region element; sequence PTVYNYIHIGN. Zn(2+) is bound by residues Cys-212, His-237, and Glu-241. The 'KMSKS' region signature appears at 271–275; sequence KMSKS. ATP is bound at residue Lys-274.

It belongs to the class-I aminoacyl-tRNA synthetase family. As to quaternary structure, monomer. It depends on Zn(2+) as a cofactor.

The protein resides in the cytoplasm. The enzyme catalyses tRNA(Cys) + L-cysteine + ATP = L-cysteinyl-tRNA(Cys) + AMP + diphosphate. This chain is Cysteine--tRNA ligase, found in Lactobacillus delbrueckii subsp. bulgaricus (strain ATCC BAA-365 / Lb-18).